A 128-amino-acid chain; its full sequence is Probable 4-amino-4-deoxy-L-arabinose-phosphoundecaprenol flippase subunit ArnF (128 aa).

Residues 1 to 2 (MG) are Cytoplasmic-facing. The helical transmembrane segment at 3-23 (LMWGLFSVIIASAAQLSLGFA) threads the bilayer. Over 24–32 (ASHLPPMTH) the chain is Periplasmic. The helical transmembrane segment at 33–53 (LWDFIAALLAFGLDARILLLG) threads the bilayer. Over 54–76 (LQGYLLSVFCWYKTLHKLALSKA) the chain is Cytoplasmic. The chain crosses the membrane as a helical span at residues 77–97 (YALLSMSYVLVWIASMVLPGW). At 98–100 (EGT) the chain is on the periplasmic side. A helical membrane pass occupies residues 101 to 121 (FSLKALLGVACIMSGLMLIFL). The Cytoplasmic portion of the chain corresponds to 122 to 128 (PTTKQRY).

The protein belongs to the ArnF family. Heterodimer of ArnE and ArnF.

Its subcellular location is the cell inner membrane. Its pathway is bacterial outer membrane biogenesis; lipopolysaccharide biosynthesis. In terms of biological role, translocates 4-amino-4-deoxy-L-arabinose-phosphoundecaprenol (alpha-L-Ara4N-phosphoundecaprenol) from the cytoplasmic to the periplasmic side of the inner membrane. The protein is Probable 4-amino-4-deoxy-L-arabinose-phosphoundecaprenol flippase subunit ArnF of Escherichia coli O7:K1 (strain IAI39 / ExPEC).